A 455-amino-acid chain; its full sequence is tRNA-2-methylthio-N(6)-dimethylallyladenosine synthase (455 aa).

One can recognise an MTTase N-terminal domain in the interval 10-130 (RKVFIKTYGC…LPDALKRVRR (121 aa)). [4Fe-4S] cluster is bound by residues cysteine 19, cysteine 55, cysteine 93, cysteine 171, cysteine 175, and cysteine 178. Positions 157–389 (RSRGVTAFLT…QALLLRQQKE (233 aa)) constitute a Radical SAM core domain. A TRAM domain is found at 392–454 (ESLVGKTMDV…PNSLFAEVAG (63 aa)).

This sequence belongs to the methylthiotransferase family. MiaB subfamily. In terms of assembly, monomer. Requires [4Fe-4S] cluster as cofactor.

The protein localises to the cytoplasm. The catalysed reaction is N(6)-dimethylallyladenosine(37) in tRNA + (sulfur carrier)-SH + AH2 + 2 S-adenosyl-L-methionine = 2-methylsulfanyl-N(6)-dimethylallyladenosine(37) in tRNA + (sulfur carrier)-H + 5'-deoxyadenosine + L-methionine + A + S-adenosyl-L-homocysteine + 2 H(+). In terms of biological role, catalyzes the methylthiolation of N6-(dimethylallyl)adenosine (i(6)A), leading to the formation of 2-methylthio-N6-(dimethylallyl)adenosine (ms(2)i(6)A) at position 37 in tRNAs that read codons beginning with uridine. This is tRNA-2-methylthio-N(6)-dimethylallyladenosine synthase from Agrobacterium fabrum (strain C58 / ATCC 33970) (Agrobacterium tumefaciens (strain C58)).